A 190-amino-acid polypeptide reads, in one-letter code: Peptidyl-tRNA hydrolase (190 aa).

Y17 serves as a coordination point for tRNA. The active-site Proton acceptor is H22. TRNA-binding residues include Y67 and N69.

This sequence belongs to the PTH family. In terms of assembly, monomer.

Its subcellular location is the cytoplasm. It catalyses the reaction an N-acyl-L-alpha-aminoacyl-tRNA + H2O = an N-acyl-L-amino acid + a tRNA + H(+). In terms of biological role, hydrolyzes ribosome-free peptidyl-tRNAs (with 1 or more amino acids incorporated), which drop off the ribosome during protein synthesis, or as a result of ribosome stalling. Its function is as follows. Catalyzes the release of premature peptidyl moieties from peptidyl-tRNA molecules trapped in stalled 50S ribosomal subunits, and thus maintains levels of free tRNAs and 50S ribosomes. This is Peptidyl-tRNA hydrolase from Moorella thermoacetica (strain ATCC 39073 / JCM 9320).